A 487-amino-acid polypeptide reads, in one-letter code: 2-succinylbenzoate--CoA ligase (487 aa).

Belongs to the ATP-dependent AMP-binding enzyme family. MenE subfamily.

It carries out the reaction 2-succinylbenzoate + ATP + CoA = 2-succinylbenzoyl-CoA + AMP + diphosphate. It participates in quinol/quinone metabolism; 1,4-dihydroxy-2-naphthoate biosynthesis; 1,4-dihydroxy-2-naphthoate from chorismate: step 5/7. Its pathway is quinol/quinone metabolism; menaquinone biosynthesis. In terms of biological role, converts 2-succinylbenzoate (OSB) to 2-succinylbenzoyl-CoA (OSB-CoA). This chain is 2-succinylbenzoate--CoA ligase, found in Bacillus velezensis (strain DSM 23117 / BGSC 10A6 / LMG 26770 / FZB42) (Bacillus amyloliquefaciens subsp. plantarum).